The chain runs to 335 residues: MSKMTNDLEKIRGGVHIAVQGYEVDRITEVPIMRRAEKVYLICKPGNNDSKRGKAFKNVIIKKFEEKRVNYEIVEADLFDLDDIVKKMKLIIAHERKEFGDVKFYINVSSGSTIGCIAGITCAMILNKENSRIIPYYVMPEKSLDGLSEKEKEELKKEYESKYNCPYLPRSFGVRGVKLIYPFEVTLPREELLIFLKFIGRAGNRGLTIKELSILTKEEFLNVDLNDNESIKELIKAVERKESVSNSSVKKMKNLVRELKEVVGSDVDDLKKIITWRKKCRSSVSSTGQSDLVWVNKNVVEKLLELELIEKPEKIGKSKYIRISEKGKMLLNYVG.

This is an uncharacterized protein from Methanocaldococcus jannaschii (strain ATCC 43067 / DSM 2661 / JAL-1 / JCM 10045 / NBRC 100440) (Methanococcus jannaschii).